Here is a 423-residue protein sequence, read N- to C-terminus: UPF0229 protein Pfl01_5140 (423 aa).

The interval 83-108 (TAGEHIARPPGGGGGRGPGKAGNSGE) is disordered. The segment covering 92–107 (PGGGGGRGPGKAGNSG) has biased composition (gly residues).

Belongs to the UPF0229 family.

In Pseudomonas fluorescens (strain Pf0-1), this protein is UPF0229 protein Pfl01_5140.